We begin with the raw amino-acid sequence, 370 residues long: Biotin synthase (370 aa).

Positions 50–276 (FSDGTVDACS…IAVYRFLHPE (227 aa)) constitute a Radical SAM core domain. 3 residues coordinate [4Fe-4S] cluster: cysteine 68, cysteine 72, and cysteine 75. [2Fe-2S] cluster contacts are provided by cysteine 208 and arginine 280. The segment at 328-370 (AGLEPNREANTFDPESVKARHRSPAAETASNANRTNATTETDD) is disordered. Residues 352–370 (AAETASNANRTNATTETDD) are compositionally biased toward low complexity.

It belongs to the radical SAM superfamily. Biotin synthase family. Homodimer. The cofactor is [4Fe-4S] cluster. [2Fe-2S] cluster serves as cofactor.

It catalyses the reaction (4R,5S)-dethiobiotin + (sulfur carrier)-SH + 2 reduced [2Fe-2S]-[ferredoxin] + 2 S-adenosyl-L-methionine = (sulfur carrier)-H + biotin + 2 5'-deoxyadenosine + 2 L-methionine + 2 oxidized [2Fe-2S]-[ferredoxin]. It functions in the pathway cofactor biosynthesis; biotin biosynthesis; biotin from 7,8-diaminononanoate: step 2/2. Functionally, catalyzes the conversion of dethiobiotin (DTB) to biotin by the insertion of a sulfur atom into dethiobiotin via a radical-based mechanism. This Natronomonas pharaonis (strain ATCC 35678 / DSM 2160 / CIP 103997 / JCM 8858 / NBRC 14720 / NCIMB 2260 / Gabara) (Halobacterium pharaonis) protein is Biotin synthase.